The following is a 258-amino-acid chain: Small ribosomal subunit protein uS2 (258 aa).

The disordered stretch occupies residues 226–258; it reads KQGQDDEETLEVDFKENADGSEEIVSAEENPED. Acidic residues predominate over residues 244–258; it reads DGSEEIVSAEENPED.

The protein belongs to the universal ribosomal protein uS2 family.

The polypeptide is Small ribosomal subunit protein uS2 (Lactobacillus acidophilus (strain ATCC 700396 / NCK56 / N2 / NCFM)).